A 200-amino-acid polypeptide reads, in one-letter code: Peptidyl-tRNA hydrolase (200 aa).

Tyr-16 provides a ligand contact to tRNA. Residue His-21 is the Proton acceptor of the active site. TRNA is bound by residues Phe-67, Asn-69, and Asn-115.

The protein belongs to the PTH family. As to quaternary structure, monomer.

Its subcellular location is the cytoplasm. The catalysed reaction is an N-acyl-L-alpha-aminoacyl-tRNA + H2O = an N-acyl-L-amino acid + a tRNA + H(+). Functionally, hydrolyzes ribosome-free peptidyl-tRNAs (with 1 or more amino acids incorporated), which drop off the ribosome during protein synthesis, or as a result of ribosome stalling. In terms of biological role, catalyzes the release of premature peptidyl moieties from peptidyl-tRNA molecules trapped in stalled 50S ribosomal subunits, and thus maintains levels of free tRNAs and 50S ribosomes. The sequence is that of Peptidyl-tRNA hydrolase from Prochlorococcus marinus (strain AS9601).